Here is a 319-residue protein sequence, read N- to C-terminus: Thymidylate synthase (319 aa).

Residues arginine 25 and 181–182 each bind dUMP; that span reads RR. Cysteine 201 serves as the catalytic Nucleophile. Residues 221–224, asparagine 232, and 262–264 each bind dUMP; these read RSAD and HIY. Aspartate 224 contacts (6R)-5,10-methylene-5,6,7,8-tetrahydrofolate. Alanine 318 serves as a coordination point for (6R)-5,10-methylene-5,6,7,8-tetrahydrofolate.

This sequence belongs to the thymidylate synthase family. Bacterial-type ThyA subfamily. As to quaternary structure, homodimer.

Its subcellular location is the cytoplasm. It carries out the reaction dUMP + (6R)-5,10-methylene-5,6,7,8-tetrahydrofolate = 7,8-dihydrofolate + dTMP. It functions in the pathway pyrimidine metabolism; dTTP biosynthesis. In terms of biological role, catalyzes the reductive methylation of 2'-deoxyuridine-5'-monophosphate (dUMP) to 2'-deoxythymidine-5'-monophosphate (dTMP) while utilizing 5,10-methylenetetrahydrofolate (mTHF) as the methyl donor and reductant in the reaction, yielding dihydrofolate (DHF) as a by-product. This enzymatic reaction provides an intracellular de novo source of dTMP, an essential precursor for DNA biosynthesis. This is Thymidylate synthase from Oenococcus oeni (strain ATCC BAA-331 / PSU-1).